We begin with the raw amino-acid sequence, 181 residues long: Large ribosomal subunit protein uL5c (181 aa).

This sequence belongs to the universal ribosomal protein uL5 family. In terms of assembly, part of the 50S ribosomal subunit; contacts the 5S rRNA.

The protein localises to the plastid. It localises to the chloroplast. In terms of biological role, binds 5S rRNA, forms part of the central protuberance of the 50S subunit. The protein is Large ribosomal subunit protein uL5c (rpl5) of Guillardia theta (Cryptophyte).